A 188-amino-acid chain; its full sequence is GTPase KRas (188 aa).

GTP contacts are provided by residues 10 to 18, 29 to 35, 59 to 60, and 116 to 119; these read GAGGVGKSA, VDEYDPT, AG, and NKYD. Positions 32-40 match the Effector region motif; that stretch reads YDPTIEDSY. A disordered region spans residues 167-188; that stretch reads KEKMSKEGKKKKKKSKTKCILM. Cys185 carries the post-translational modification Cysteine methyl ester. The S-farnesyl cysteine moiety is linked to residue Cys185. Positions 186 to 188 are cleaved as a propeptide — removed in mature form; sequence ILM.

This sequence belongs to the small GTPase superfamily. Ras family.

The protein localises to the cell membrane. It is found in the cytoplasm. The catalysed reaction is GTP + H2O = GDP + phosphate + H(+). Alternates between an inactive form bound to GDP and an active form bound to GTP. Activated by a guanine nucleotide-exchange factor (GEF) and inactivated by a GTPase-activating protein (GAP). In terms of biological role, ras proteins bind GDP/GTP and possess intrinsic GTPase activity. Plays an important role in the regulation of cell proliferation. May play a role in promoting oncogenic events by inducing transcriptional silencing of tumor suppressor genes (TSGs). This is GTPase KRas (kras) from Kryptolebias marmoratus (Mangrove killifish).